A 158-amino-acid polypeptide reads, in one-letter code: Small ribosomal subunit protein uS9 (158 aa).

It belongs to the universal ribosomal protein uS9 family.

This is Small ribosomal subunit protein uS9 from Nitrobacter hamburgensis (strain DSM 10229 / NCIMB 13809 / X14).